Consider the following 155-residue polypeptide: Protein SprT-like (155 aa).

Residues 7–145 (QRHMEEVSLQ…GSCGGKLIQT (139 aa)) enclose the SprT-like domain. His-67 contacts Zn(2+). Glu-68 is a catalytic residue. His-71 serves as a coordination point for Zn(2+).

This sequence belongs to the SprT family. Requires Zn(2+) as cofactor.

It localises to the cytoplasm. The protein is Protein SprT-like of Listeria monocytogenes serotype 4b (strain CLIP80459).